The following is a 192-amino-acid chain: Sarcoplasmic calcium-binding protein, alpha-B and -A chains (192 aa).

The residue at position 1 (Ala-1) is an N-acetylalanine. EF-hand domains lie at 4 to 39 (WDNRVKYVVRYMYDIDDDGFLDKNDFECLAVRNTLI), 56 to 91 (IMRNLWNEIAELADFNKDGEVTVDEFKMAVQKHCQG), 100 to 135 (AFKVFIANQFKAIDVNGDGKVGLDEYRLDCITRSAF), and 136 to 171 (AEVKEIDDAYDKLTTEDDRKAGGLTLERYQDLYAQF). Ca(2+) contacts are provided by Asp-17, Asp-19, Asp-21, Asp-28, Asp-69, Asn-71, Asp-73, Glu-75, Glu-80, Asp-113, Asn-115, Asp-117, Lys-119, and Glu-124.

SCPs from crayfish, lobster, and shrimp are polymorphic dimers; three isotypes (alpha-alpha, alpha-beta, and beta-beta) have been identified.

Its function is as follows. Like parvalbumins, SCPs seem to be more abundant in fast contracting muscles, but no functional relationship can be established from this distribution. The protein is Sarcoplasmic calcium-binding protein, alpha-B and -A chains of Penaeus sp. (Penoeid shrimp).